The following is a 332-amino-acid chain: Cell growth regulator with RING finger domain protein 1 (332 aa).

The RING-type zinc finger occupies 274–309; the sequence is CVVCQNGTVNWVLLPCRHTCLCDGCVKYFQQCPMCR.

In terms of tissue distribution, ubiquitously expressed with high expression in testis and the cerebellum.

It is found in the nucleus. Its subcellular location is the endoplasmic reticulum. In terms of biological role, able to inhibit growth in several cell lines. The chain is Cell growth regulator with RING finger domain protein 1 (CGRRF1) from Homo sapiens (Human).